Here is a 506-residue protein sequence, read N- to C-terminus: Anaerobic nitric oxide reductase transcription regulator NorR (506 aa).

Residue Asp-57 is modified to 4-aspartylphosphate. A Sigma-54 factor interaction domain is found at 187-416 (MIGLSPAMTQ…LEHAIHRAVV (230 aa)). ATP contacts are provided by residues 215-222 (GETGTGKE) and 278-287 (ADNGTLFLDE). The segment at residues 481-500 (WAASARALETDVANLHRLAK) is a DNA-binding region (H-T-H motif).

It functions in the pathway nitrogen metabolism; nitric oxide reduction. In terms of biological role, required for the expression of anaerobic nitric oxide (NO) reductase, acts as a transcriptional activator for at least the norVW operon. Activation also requires sigma-54. The protein is Anaerobic nitric oxide reductase transcription regulator NorR of Salmonella agona (strain SL483).